Here is a 72-residue protein sequence, read N- to C-terminus: KRAVQSEKRRQHNASRRSMMRTYIKKVYAAVASGDKEAAQKAFNDMQPIVDRQATKGLIHKNKAARHKANLQ.

Belongs to the bacterial ribosomal protein bS20 family.

Functionally, binds directly to 16S ribosomal RNA. This chain is Small ribosomal subunit protein bS20 (rpsT), found in Proteus mirabilis.